A 37-amino-acid polypeptide reads, in one-letter code: MKVRASVKKICRNCKVIKRHGVVRVICVEPKHKQRQG.

It belongs to the bacterial ribosomal protein bL36 family.

This chain is Large ribosomal subunit protein bL36, found in Psychromonas ingrahamii (strain DSM 17664 / CCUG 51855 / 37).